The following is a 416-amino-acid chain: Phosphatidylinositol 5-phosphate 4-kinase type-2 beta (416 aa).

S2 is modified (N-acetylserine). A Phosphothreonine modification is found at T8. The residue at position 19 (S19) is a Phosphoserine. The region spanning A38–L415 is the PIPK domain. The interval V64–D70 is required for interaction with PIP5K1A. 2 positions are modified to N6-acetyllysine: K94 and K150. Residues R202–V204 and K214 each bind ATP. Residues N203–V204 and K214 contribute to the GTP site. Phosphothreonine is present on T322. The residue at position 326 (S326) is a Phosphoserine. D369 is a GTP binding site.

Homodimer. Binds TNFRSF1A. Interacts with PIP4K2A; the interaction suppresses ubiquitination by the SPOP/CUL3 complex. In terms of processing, ubiquitinated by the SPOP/CUL3 complex. Ubiquitination is stimulated by PtdIns5P levels. Phosphorylated on serine residues. As to expression, highly expressed in brain, heart, pancreas, skeletal muscle and kidney. Detected at lower levels in placenta, lung and liver.

Its subcellular location is the endoplasmic reticulum membrane. The protein localises to the cell membrane. It is found in the nucleus. The protein resides in the cytoplasm. It carries out the reaction a 1,2-diacyl-sn-glycero-3-phospho-(1D-myo-inositol-5-phosphate) + ATP = a 1,2-diacyl-sn-glycero-3-phospho-(1D-myo-inositol-4,5-bisphosphate) + ADP + H(+). The enzyme catalyses 1,2-dihexadecanoyl-sn-glycero-3-phospho-(1D-myo-inositol-5-phosphate) + ATP = 1,2-dihexadecanoyl-sn-glycero-3-phospho-(1D-myo-inositol-4,5-bisphosphate) + ADP + H(+). The catalysed reaction is 1,2-dihexadecanoyl-sn-glycero-3-phospho-(1D-myo-inositol-5-phosphate) + GTP = 1,2-dihexadecanoyl-sn-glycero-3-phospho-(1D-myo-inositol-4,5-bisphosphate) + GDP + H(+). In terms of biological role, participates in the biosynthesis of phosphatidylinositol 4,5-bisphosphate. Preferentially utilizes GTP, rather than ATP, for PI(5)P phosphorylation and its activity reflects changes in direct proportion to the physiological GTP concentration. Its GTP-sensing activity is critical for metabolic adaptation. PIP4Ks negatively regulate insulin signaling through a catalytic-independent mechanism. They interact with PIP5Ks and suppress PIP5K-mediated PtdIns(4,5)P2 synthesis and insulin-dependent conversion to PtdIns(3,4,5)P3. In Homo sapiens (Human), this protein is Phosphatidylinositol 5-phosphate 4-kinase type-2 beta.